We begin with the raw amino-acid sequence, 692 residues long: Serine/threonine-protein phosphatase PP-Z1 (692 aa).

Disordered stretches follow at residues Met1–Asn309 and Glu321–Phe357. Gly2 carries the N-myristoyl glycine lipid modification. 3 stretches are compositionally biased toward low complexity: residues Ser32–Asn41, Ser49–Ser69, and Ser91–Ser122. Phosphoserine is present on Ser49. Positions Leu170–Asp179 are enriched in acidic residues. The residue at position 171 (Thr171) is a Phosphothreonine. A compositionally biased stretch (low complexity) spans Arg190 to Val204. Positions Arg207 to Pro216 are enriched in basic and acidic residues. Residues Ser209 and Ser222 each carry the phosphoserine modification. Polar residues-rich tracts occupy residues Asn217–Tyr229 and Phe251–Gly267. At Thr261 the chain carries Phosphothreonine. Ser265 is modified (phosphoserine). Residues Thr280–His289 are compositionally biased toward low complexity. A compositionally biased stretch (basic and acidic residues) spans Ser291–Asn303. Residues Glu321 to Thr331 show a composition bias toward polar residues. Mn(2+) contacts are provided by Asp419, His421, Asp447, and Asn479. His480 functions as the Proton donor in the catalytic mechanism. Positions 528 and 603 each coordinate Mn(2+). Residues Leu672–Gln692 form a disordered region. Over residues Ala673–Gln692 the composition is skewed to polar residues. Ser690 bears the Phosphoserine mark.

The protein belongs to the PPP phosphatase family. PP-Z subfamily. As to quaternary structure, interacts with SIS2 and VHS3, which regulate its activity. Mn(2+) is required as a cofactor.

It catalyses the reaction O-phospho-L-seryl-[protein] + H2O = L-seryl-[protein] + phosphate. The catalysed reaction is O-phospho-L-threonyl-[protein] + H2O = L-threonyl-[protein] + phosphate. With respect to regulation, inhibited by the regulatory subunits VHS3 and SIS2. In terms of biological role, essential for the maintenance of cell size and integrity in response to osmotic stress. The protein is Serine/threonine-protein phosphatase PP-Z1 (PPZ1) of Saccharomyces cerevisiae (strain ATCC 204508 / S288c) (Baker's yeast).